We begin with the raw amino-acid sequence, 34 residues long: Photosystem II reaction center protein M (34 aa).

Residues 7–27 form a helical membrane-spanning segment; that stretch reads GFVATLLFVLVPAIFLIILYI.

Belongs to the PsbM family. In terms of assembly, PSII is composed of 1 copy each of membrane proteins PsbA, PsbB, PsbC, PsbD, PsbE, PsbF, PsbH, PsbI, PsbJ, PsbK, PsbL, PsbM, PsbT, PsbX, PsbY, PsbZ, Psb30/Ycf12, peripheral proteins PsbO, CyanoQ (PsbQ), PsbU, PsbV and a large number of cofactors. It forms dimeric complexes.

The protein resides in the cellular thylakoid membrane. One of the components of the core complex of photosystem II (PSII). PSII is a light-driven water:plastoquinone oxidoreductase that uses light energy to abstract electrons from H(2)O, generating O(2) and a proton gradient subsequently used for ATP formation. It consists of a core antenna complex that captures photons, and an electron transfer chain that converts photonic excitation into a charge separation. This subunit is found at the monomer-monomer interface. The sequence is that of Photosystem II reaction center protein M from Synechococcus sp. (strain RCC307).